Reading from the N-terminus, the 312-residue chain is Chitin deacetylase 2 (312 aa).

Residues 1 to 44 form the signal peptide; it reads MRIQLNTIDLQCIIALSCLGQFVHAEANREDLKQIDFQFPVLER. A disulfide bridge links Cys117 with Cys300. The NodB homology domain maps to 118-307; sequence SKLSQTFDDG…SHCVGGIDYI (190 aa). The active-site Proton acceptor is the Asp125. Asp125 contacts acetate. Asp126 provides a ligand contact to Co(2+). Asn142 carries N-linked (GlcNAc...) asparagine glycosylation. Co(2+) contacts are provided by His172 and His176. N-linked (GlcNAc...) asparagine glycosylation is found at Asn181 and Asn199. Position 213 (Tyr213) interacts with acetate. N-linked (GlcNAc...) asparagine glycosylation is found at Asn246 and Asn263. The Proton donor role is filled by His273.

It belongs to the polysaccharide deacetylase family. Monomer. Co(2+) is required as a cofactor. Post-translationally, N-glycosylated.

It localises to the prospore. The enzyme catalyses [(1-&gt;4)-N-acetyl-beta-D-glucosaminyl](n) + n H2O = chitosan + n acetate. In terms of biological role, hydrolyzes the N-acetamido groups of N-acetyl-D-glucosamine residues in chitin to form chitosan and acetate. Chitosan is a component of the spore wall. In Saccharomyces cerevisiae (strain ATCC 204508 / S288c) (Baker's yeast), this protein is Chitin deacetylase 2.